Consider the following 157-residue polypeptide: Putative pre-16S rRNA nuclease (157 aa).

It belongs to the YqgF nuclease family.

It localises to the cytoplasm. Functionally, could be a nuclease involved in processing of the 5'-end of pre-16S rRNA. The protein is Putative pre-16S rRNA nuclease of Parasynechococcus marenigrum (strain WH8102).